The following is a 301-amino-acid chain: Phospholipase A1 VesT1.02 (301 aa).

Intrachain disulfides connect Cys-87–Cys-294, Cys-176–Cys-245, Cys-181–Cys-262, Cys-219–Cys-228, Cys-240–Cys-246, and Cys-267–Cys-269. Ser-137 serves as the catalytic Nucleophile. Asp-165 (charge relay system) is an active-site residue. His-230 serves as the catalytic Charge relay system.

The protein belongs to the AB hydrolase superfamily. Lipase family. Is not glycosylated. In terms of tissue distribution, expressed by the venom gland.

Its subcellular location is the secreted. The catalysed reaction is a 1,2-diacyl-sn-glycero-3-phosphocholine + H2O = a 2-acyl-sn-glycero-3-phosphocholine + a fatty acid + H(+). Its function is as follows. Catalyzes the hydrolysis of phosphatidylcholine with phospholipase A1 activity. Shows hemolytic activity. This is Phospholipase A1 VesT1.02 from Vespa tropica (Greater banded hornet).